The following is a 116-amino-acid chain: Ribosome-binding factor A (116 aa).

Belongs to the RbfA family. In terms of assembly, monomer. Binds 30S ribosomal subunits, but not 50S ribosomal subunits or 70S ribosomes.

It is found in the cytoplasm. In terms of biological role, one of several proteins that assist in the late maturation steps of the functional core of the 30S ribosomal subunit. Associates with free 30S ribosomal subunits (but not with 30S subunits that are part of 70S ribosomes or polysomes). Required for efficient processing of 16S rRNA. May interact with the 5'-terminal helix region of 16S rRNA. The polypeptide is Ribosome-binding factor A (Streptococcus pyogenes serotype M5 (strain Manfredo)).